We begin with the raw amino-acid sequence, 60 residues long: Large ribosomal subunit protein bL32 (60 aa).

The protein belongs to the bacterial ribosomal protein bL32 family.

The chain is Large ribosomal subunit protein bL32 from Fervidobacterium nodosum (strain ATCC 35602 / DSM 5306 / Rt17-B1).